A 581-amino-acid polypeptide reads, in one-letter code: Pentatricopeptide repeat-containing protein At1g34160 (581 aa).

PPR repeat units lie at residues 67–101, 108–142, 143–173, 174–208, 209–239, 240–270, 272–306, 307–341, and 342–372; these read LTNDWNAIIRGFAGSSHPSLAFSWYRSMLQQSSSS, DALTCSFTLKACARALCSSAMDQLHCQINRRGLSA, DSLLCTTLLDAYSKNGDLISAYKLFDEMPVR, DVASWNALIAGLVSGNRASEAMELYKRMETEGIRR, SEVTVVAALGACSHLGDVKEGENIFHGYSND, NVIVSNAAIDMYSKCGFVDKAYQVFEQFTGK, SVVTWNTMITGFAVHGEAHRALEIFDKLEDNGIKP, DDVSYLAALTACRHAGLVEYGLSVFNNMACKGVER, and NMKHYGCVVDLLSRAGRLREAHDIICSMSMI. The tract at residues 377–452 is type E motif; it reads LWQSLLGASE…IPGLSYIEAK (76 aa). The segment at 453-483 is type E(+) motif; it reads GTIHEFYNSDKSHEQWREIYEKIDEIRFKIR. The segment at 484 to 581 is type DYW motif; sequence EDGYVAQTGL…DGSCSCRDFW (98 aa).

It belongs to the PPR family. PCMP-H subfamily.

In Arabidopsis thaliana (Mouse-ear cress), this protein is Pentatricopeptide repeat-containing protein At1g34160 (PCMP-H68).